The chain runs to 148 residues: Large ribosomal subunit protein uL15 (148 aa).

A compositionally biased stretch (basic and acidic residues) spans 1–12 (MSEPIKLHDLRP). The disordered stretch occupies residues 1 to 52 (MSEPIKLHDLRPAKGANKPKTRVGRGEASKGKTAGRGTKGTKARKQVSAAFE).

Belongs to the universal ribosomal protein uL15 family. As to quaternary structure, part of the 50S ribosomal subunit.

In terms of biological role, binds to the 23S rRNA. The polypeptide is Large ribosomal subunit protein uL15 (Corynebacterium diphtheriae (strain ATCC 700971 / NCTC 13129 / Biotype gravis)).